Here is a 433-residue protein sequence, read N- to C-terminus: UDP-N-acetylmuramoylalanine--D-glutamate ligase (433 aa).

Position 125–131 (125–131 (GTSGKTT)) interacts with ATP.

It belongs to the MurCDEF family.

It is found in the cytoplasm. It carries out the reaction UDP-N-acetyl-alpha-D-muramoyl-L-alanine + D-glutamate + ATP = UDP-N-acetyl-alpha-D-muramoyl-L-alanyl-D-glutamate + ADP + phosphate + H(+). It participates in cell wall biogenesis; peptidoglycan biosynthesis. Its function is as follows. Cell wall formation. Catalyzes the addition of glutamate to the nucleotide precursor UDP-N-acetylmuramoyl-L-alanine (UMA). This chain is UDP-N-acetylmuramoylalanine--D-glutamate ligase, found in Nitratidesulfovibrio vulgaris (strain ATCC 29579 / DSM 644 / CCUG 34227 / NCIMB 8303 / VKM B-1760 / Hildenborough) (Desulfovibrio vulgaris).